The chain runs to 136 residues: MTVWEVHWRGEADGWQKNPTVAWLQGPEKEGAEKAFWAIWEVGDKLLNHRSAPGAPKKRGIGQLLIDWGLDVGEKLQVPVYLESTRAGLVFYTKLGFEKLSQGAVVKAEVTHVASDFELPVTVKMPSAARRMGFEG.

It participates in siderophore biosynthesis. Functionally, probable acyltransferase; part of the gene cluster that mediates the biosynthesis of hydroxamate-containing siderophores that play a critical role in virulence via intracellular iron acquisition during macrophage infection. This chain is Probable acyltransferase SID5, found in Ajellomyces capsulatus (Darling's disease fungus).